Reading from the N-terminus, the 718-residue chain is F-box/LRR-repeat protein 18 (718 aa).

Positions 25–72 (GVHLLGFSDEILLHILSHVPSTDLILNVRRTCRKLAALCLDKSLIHTV) constitute an F-box domain. LRR repeat units follow at residues 77-103 (DYQA…SMAG), 104-128 (CYWL…NLSG), 129-153 (CHLT…AIDV), 177-201 (KQTL…LLYF), 324-352 (CTLS…NLSG), 367-392 (EDDI…NLSA), 393-422 (AHHH…SLPV), 468-492 (CPQP…ELIG), 516-540 (AQSV…TLAQ), 542-567 (PSVL…SLAN), 572-597 (GKVV…RLEQ), and 599-623 (YFSA…CLVS).

Directly interacts with SKP1 and CUL1.

In terms of biological role, substrate-recognition component of the SCF (SKP1-CUL1-F-box protein)-type E3 ubiquitin ligase complex. The sequence is that of F-box/LRR-repeat protein 18 (FBXL18) from Homo sapiens (Human).